A 312-amino-acid polypeptide reads, in one-letter code: Ribosomal protein L11 methyltransferase (312 aa).

The S-adenosyl-L-methionine site is built by Thr162, Gly183, Asp205, and Asn248.

The protein belongs to the methyltransferase superfamily. PrmA family.

It is found in the cytoplasm. It catalyses the reaction L-lysyl-[protein] + 3 S-adenosyl-L-methionine = N(6),N(6),N(6)-trimethyl-L-lysyl-[protein] + 3 S-adenosyl-L-homocysteine + 3 H(+). Methylates ribosomal protein L11. This is Ribosomal protein L11 methyltransferase from Bacillus cereus (strain B4264).